The sequence spans 102 residues: NADH-quinone oxidoreductase subunit K (102 aa).

3 helical membrane-spanning segments follow: residues 5-25, 31-51, and 66-86; these read IAHY…GIFL, IVIL…FVAF, and FVLT…VVFF.

Belongs to the complex I subunit 4L family. NDH-1 is composed of 14 different subunits. Subunits NuoA, H, J, K, L, M, N constitute the membrane sector of the complex.

The protein localises to the cell inner membrane. The enzyme catalyses a quinone + NADH + 5 H(+)(in) = a quinol + NAD(+) + 4 H(+)(out). Functionally, NDH-1 shuttles electrons from NADH, via FMN and iron-sulfur (Fe-S) centers, to quinones in the respiratory chain. The immediate electron acceptor for the enzyme in this species is believed to be ubiquinone. Couples the redox reaction to proton translocation (for every two electrons transferred, four hydrogen ions are translocated across the cytoplasmic membrane), and thus conserves the redox energy in a proton gradient. The protein is NADH-quinone oxidoreductase subunit K of Mesorhizobium japonicum (strain LMG 29417 / CECT 9101 / MAFF 303099) (Mesorhizobium loti (strain MAFF 303099)).